A 265-amino-acid polypeptide reads, in one-letter code: MSTLRLRGDLPERVDLLNITPLALSGLSEAEAGKLAIGTSRRGLTLGDVFEISLDGSDSLVIEGGSARLDRVGAALSQGSIRVEGDVGQRLGEGMAAGSLTVTGSAGPYAGTGATGGTITIEGDAGDHAGGAVYAAKAGLDGATLVIKGAAGDHLGDRMRRGMILAGSAGAFAASRMIAGTIVVSGALGDHPGYGMRRGTLIAGSHGTLLPTFVETGTPDLVFVRLLAQSLKHLGAAQASLLSGTLRRYSGDLATLGKGELFVPA.

The protein belongs to the FwdC/FmdC family. Octaheteromer. Part of the formyltransferase/hydrolase complex fhc; composed of FhcA, FhcB, FhcC and FhcD.

It localises to the cytoplasm. It participates in one-carbon metabolism; formaldehyde degradation; formate from formaldehyde (H(4)MPT route): step 4/5. Its function is as follows. Involved in the transformation of 5-formyl tetrahydromethanopterin (5-formyl-H(4)MPT) to methanofuran (MFR) and formate via the formylmethanofuran (formyl-MFR). The chain is Formyltransferase/hydrolase complex Fhc subunit C (fhcC) from Methylorubrum extorquens (strain ATCC 14718 / DSM 1338 / JCM 2805 / NCIMB 9133 / AM1) (Methylobacterium extorquens).